Consider the following 1654-residue polypeptide: Mediator of RNA polymerase II transcription subunit 12 (1654 aa).

Disordered regions lie at residues 52–72 (DLNGDNSRSQHTAGSGVLSGN) and 1481–1530 (SKQT…SFQT). Residues 1515 to 1530 (PLSSARPSSEAASFQT) show a composition bias toward polar residues.

It belongs to the Mediator complex subunit 12 family. As to quaternary structure, component of the SRB8-11 complex, which itself associates with the Mediator complex.

Its subcellular location is the nucleus. Functionally, component of the SRB8-11 complex. The SRB8-11 complex is a regulatory module of the Mediator complex which is itself involved in regulation of basal and activated RNA polymerase II-dependent transcription. The SRB8-11 complex may be involved in the transcriptional repression of a subset of genes regulated by Mediator. It may inhibit the association of the Mediator complex with RNA polymerase II to form the holoenzyme complex. This Scheffersomyces stipitis (strain ATCC 58785 / CBS 6054 / NBRC 10063 / NRRL Y-11545) (Yeast) protein is Mediator of RNA polymerase II transcription subunit 12 (SRB8).